A 96-amino-acid chain; its full sequence is Large ribosomal subunit protein bL25 (96 aa).

Belongs to the bacterial ribosomal protein bL25 family. Part of the 50S ribosomal subunit; part of the 5S rRNA/L5/L18/L25 subcomplex. Contacts the 5S rRNA. Binds to the 5S rRNA independently of L5 and L18.

Its function is as follows. This is one of the proteins that binds to the 5S RNA in the ribosome where it forms part of the central protuberance. This is Large ribosomal subunit protein bL25 from Francisella philomiragia subsp. philomiragia (strain ATCC 25017 / CCUG 19701 / FSC 153 / O#319-036).